The chain runs to 466 residues: IQ domain-containing protein C (466 aa).

The 30-residue stretch at 6–35 folds into the IQ domain; that stretch reads LVRKVSALQACVRGFLVRRQFQSLRAEYEA. Disordered regions lie at residues 105–157, 214–233, 238–310, and 394–466; these read KSGE…PHSQ, EQAC…DQSY, TGEL…QTFG, and VLDL…EPPG. Residues 132–153 are compositionally biased toward basic and acidic residues; the sequence is PSQEKTRDTTRMENPEATDQRL. The segment covering 282–293 has biased composition (polar residues); that stretch reads GPPSSIPSNSQA. The segment covering 297–306 has biased composition (basic and acidic residues); sequence RLTKGPDDGR. Ser-438 carries the phosphoserine modification.

The polypeptide is IQ domain-containing protein C (IQCC) (Homo sapiens (Human)).